The sequence spans 139 residues: Cystatin cpi-1 (139 aa).

The first 19 residues, 1-19 (MRFILLIALVFAVLDGINC), serve as a signal peptide directing secretion. Asparagine 29 carries an N-linked (GlcNAc...) asparagine glycan. Positions 65–69 (QVVAG) match the Secondary area of contact motif. A disulfide bond links cysteine 83 and cysteine 99.

This sequence belongs to the cystatin family.

In terms of biological role, cysteine protease inhibitor which inhibits members of the peptidase C1 family. Does not inhibit asparaginyl endopeptidase. May play a protective role against exogenous cysteine proteases derived from soil bacteria or fungi, or rotting fruits and vegetation. This chain is Cystatin cpi-1, found in Caenorhabditis elegans.